A 100-amino-acid chain; its full sequence is Integration host factor subunit alpha (100 aa).

The protein belongs to the bacterial histone-like protein family. Heterodimer of an alpha and a beta chain.

This protein is one of the two subunits of integration host factor, a specific DNA-binding protein that functions in genetic recombination as well as in transcriptional and translational control. The sequence is that of Integration host factor subunit alpha from Methylobacillus flagellatus (strain ATCC 51484 / DSM 6875 / VKM B-1610 / KT).